A 448-amino-acid chain; its full sequence is Tubby-like F-box protein 3 (448 aa).

Residues 56–102 (ESRWASLPPELLREVIRRLEADESTWPSRRNVVCFAAVCRTWREMCK) enclose the F-box domain. Over residues 387–403 (PSPPPAGAPTPSQPGPA) the composition is skewed to pro residues. The disordered stretch occupies residues 387–406 (PSPPPAGAPTPSQPGPADPE).

This sequence belongs to the TUB family. Expressed in roots, leaves, flowers and seeds.

The sequence is that of Tubby-like F-box protein 3 (TULP3) from Oryza sativa subsp. japonica (Rice).